The sequence spans 399 residues: MKVLVLNSGSSSLKYQFIDTDTEVALCKGVVDRIGLPGAFIRHQKNGQEIVKEQEINDHNVAIKLVLEMLTHEEAGIIHSMDEIDAIGHRVVHGGEYFSDAVIVNEEVKKAIRECIELAPLHNPANLMGIEACEKEIPGKPNVAVFDTAFHQTMPRYAYMYSLPYEVYEKYKIRKYGFHGTSHKYVAIKAAEYLRRPLEELKLITCHLGNGSSVCAIKYGKSVDTSMGFTPLAGLAMGTRSGTIDPAVILYLMEKEKMDVKQMNDFLNKKSGVLGISGVSSDFRDLEKAANEGNERAQLAIDMFCYRVKKYIGEYAAVLGGVDAIIFTAGIGENNALVRDKCLTDLEYMGVLYDRERNFNVEKGKVFEINKPESKVKVLIVPTNEELMIARETKRLLSK.

Residue Asn7 participates in Mg(2+) binding. Lys14 contributes to the ATP binding site. Arg90 contacts substrate. Asp147 functions as the Proton donor/acceptor in the catalytic mechanism. Residues 207–211 (HLGNG), 282–284 (DFR), and 330–334 (GIGEN) contribute to the ATP site. A Mg(2+)-binding site is contributed by Glu385.

This sequence belongs to the acetokinase family. Homodimer. It depends on Mg(2+) as a cofactor. Mn(2+) serves as cofactor.

The protein localises to the cytoplasm. The catalysed reaction is acetate + ATP = acetyl phosphate + ADP. Its pathway is metabolic intermediate biosynthesis; acetyl-CoA biosynthesis; acetyl-CoA from acetate: step 1/2. Functionally, catalyzes the formation of acetyl phosphate from acetate and ATP. Can also catalyze the reverse reaction. The polypeptide is Acetate kinase (Caldicellulosiruptor bescii (strain ATCC BAA-1888 / DSM 6725 / KCTC 15123 / Z-1320) (Anaerocellum thermophilum)).